The sequence spans 1050 residues: MDS1 and EVI1 complex locus protein EVI1-B (1050 aa).

3 C2H2-type zinc fingers span residues 21–48, 75–97, and 103–125; these read YHCEECDQLFESKTELSNHQKYSCGTPH, HECKECDQVFPDMQSLEKHLLSH, and YKCDQCPKAFNWKSNLIRHQMSH. The C2H2-type 4; degenerate zinc finger occupies 131–155; it reads YECENCSKQVFTDPSNLQRHIRSQH. 2 C2H2-type zinc fingers span residues 161-183 and 189-211; these read HACSECGKTFATSSGLKQHKHIH and FVCEVCHKSYTQFSNLCRHKRMH. A C2H2-type 7; atypical zinc finger spans residues 218-240; the sequence is IKCKDCGQMFSTTSSLNKHRRFC. 2 disordered regions span residues 371–421 and 529–612; these read ITEN…SDKD and PLKV…EKKD. Positions 379–390 are enriched in basic and acidic residues; sequence RPHEKVSDHSES. Over residues 397–411 the composition is skewed to polar residues; the sequence is STPSGSDLETTSGSD. Positions 420-433 match the Nuclear localization signal motif; sequence KDKLKENGKLYKDK. Basic and acidic residues predominate over residues 529–542; that stretch reads PLKVEPESPKESKK. The short motif at 551–555 is the CTBP-binding motif 1 element; it reads AFDLT. Over residues 564–576 the composition is skewed to low complexity; the sequence is SPNAPSKSSAPTS. Positions 582-586 match the CTBP-binding motif 2 motif; that stretch reads PLDLS. The segment covering 588–598 has biased composition (polar residues); that stretch reads GSRSRATTTKQ. The segment covering 599–612 has biased composition (basic and acidic residues); sequence TESRKNHIFGEKKD. 3 consecutive C2H2-type zinc fingers follow at residues 731–753, 759–782, and 788–810; these read YTCRYCGKIFPRSANLTRHLRTH, YRCKYCDRSFSISSNLQRHIRNIH, and FKCHLCDRCFGQQTNLDRHLKKH. Residues 928-951 form a disordered region; sequence KSEVNCKVSPSRHDDDDDDEEEDF.

In terms of assembly, homooligomer. Interacts with ctbp.

It localises to the nucleus. The protein localises to the nucleus speckle. In terms of biological role, transcriptional repressor during pronephros development. Plays a role in regionalization of the pronephros; may promote formation of the distal tubule and duct over formation of the glomus and proximal tubule. In Xenopus laevis (African clawed frog), this protein is MDS1 and EVI1 complex locus protein EVI1-B (mecom-b).